The primary structure comprises 156 residues: Small ribosomal subunit protein uS7c (156 aa).

Belongs to the universal ribosomal protein uS7 family. As to quaternary structure, part of the 30S ribosomal subunit.

It localises to the plastid. The protein localises to the chloroplast. Functionally, one of the primary rRNA binding proteins, it binds directly to 16S rRNA where it nucleates assembly of the head domain of the 30S subunit. In Gracilaria tenuistipitata var. liui (Red alga), this protein is Small ribosomal subunit protein uS7c (rps7).